Here is a 132-residue protein sequence, read N- to C-terminus: Large-conductance mechanosensitive channel (132 aa).

The next 2 helical transmembrane spans lie at 11 to 31 (FISRGNALDLAVGVVIGGAFG) and 75 to 95 (GSFLQAVFDFVIIAFAIFLLV).

This sequence belongs to the MscL family. In terms of assembly, homopentamer.

The protein resides in the cell inner membrane. Channel that opens in response to stretch forces in the membrane lipid bilayer. May participate in the regulation of osmotic pressure changes within the cell. The sequence is that of Large-conductance mechanosensitive channel from Synechococcus sp. (strain JA-2-3B'a(2-13)) (Cyanobacteria bacterium Yellowstone B-Prime).